An 86-amino-acid chain; its full sequence is MRLLARLIALPVRGYRLLFSPWVGFNCRYQPTCSAYALDALERHGPFKGTYLMLRRIGRCHPFGGSGYDPVPGADPKHDRCCGRTP.

It belongs to the UPF0161 family.

Its subcellular location is the cell inner membrane. Could be involved in insertion of integral membrane proteins into the membrane. This is Putative membrane protein insertion efficiency factor from Ruegeria sp. (strain TM1040) (Silicibacter sp.).